The following is a 244-amino-acid chain: Small ribosomal subunit protein uS3 (244 aa).

Positions 39-107 (VREMLRKKLA…PAHINVTEVR (69 aa)) constitute a KH type-2 domain. Residues 213–244 (VGQEKQDDSPRNDRNDRGDRGDRPSRPAREAR) are disordered. Over residues 216–244 (EKQDDSPRNDRNDRGDRGDRPSRPAREAR) the composition is skewed to basic and acidic residues.

Belongs to the universal ribosomal protein uS3 family. As to quaternary structure, part of the 30S ribosomal subunit. Forms a tight complex with proteins S10 and S14.

Its function is as follows. Binds the lower part of the 30S subunit head. Binds mRNA in the 70S ribosome, positioning it for translation. This is Small ribosomal subunit protein uS3 from Xanthomonas axonopodis pv. citri (strain 306).